The following is a 193-amino-acid chain: NADH-quinone oxidoreductase subunit B (193 aa).

Positions 72, 73, 137, and 167 each coordinate [4Fe-4S] cluster.

This sequence belongs to the complex I 20 kDa subunit family. As to quaternary structure, NDH-1 is composed of 14 different subunits. Subunits NuoB, C, D, E, F, and G constitute the peripheral sector of the complex. [4Fe-4S] cluster serves as cofactor.

It localises to the cell inner membrane. It carries out the reaction a quinone + NADH + 5 H(+)(in) = a quinol + NAD(+) + 4 H(+)(out). In terms of biological role, NDH-1 shuttles electrons from NADH, via FMN and iron-sulfur (Fe-S) centers, to quinones in the respiratory chain. The immediate electron acceptor for the enzyme in this species is believed to be ubiquinone. Couples the redox reaction to proton translocation (for every two electrons transferred, four hydrogen ions are translocated across the cytoplasmic membrane), and thus conserves the redox energy in a proton gradient. The polypeptide is NADH-quinone oxidoreductase subunit B (Bradyrhizobium sp. (strain ORS 278)).